A 161-amino-acid polypeptide reads, in one-letter code: ATP synthase subunit b (161 aa).

Residues 10 to 29 (SVIQLMSFFLLLYILKKFLY) traverse the membrane as a helical segment.

This sequence belongs to the ATPase B chain family. In terms of assembly, F-type ATPases have 2 components, F(1) - the catalytic core - and F(0) - the membrane proton channel. F(1) has five subunits: alpha(3), beta(3), gamma(1), delta(1), epsilon(1). F(0) has three main subunits: a(1), b(2) and c(10-14). The alpha and beta chains form an alternating ring which encloses part of the gamma chain. F(1) is attached to F(0) by a central stalk formed by the gamma and epsilon chains, while a peripheral stalk is formed by the delta and b chains.

The protein localises to the cell inner membrane. Its function is as follows. F(1)F(0) ATP synthase produces ATP from ADP in the presence of a proton or sodium gradient. F-type ATPases consist of two structural domains, F(1) containing the extramembraneous catalytic core and F(0) containing the membrane proton channel, linked together by a central stalk and a peripheral stalk. During catalysis, ATP synthesis in the catalytic domain of F(1) is coupled via a rotary mechanism of the central stalk subunits to proton translocation. Component of the F(0) channel, it forms part of the peripheral stalk, linking F(1) to F(0). The protein is ATP synthase subunit b of Thermosipho melanesiensis (strain DSM 12029 / CIP 104789 / BI429).